A 151-amino-acid chain; its full sequence is Cell division protein SepF (151 aa).

The segment covering D17–Q29 has biased composition (acidic residues). The interval D17–H42 is disordered.

Belongs to the SepF family. In terms of assembly, homodimer. Interacts with FtsZ.

The protein localises to the cytoplasm. Functionally, cell division protein that is part of the divisome complex and is recruited early to the Z-ring. Probably stimulates Z-ring formation, perhaps through the cross-linking of FtsZ protofilaments. Its function overlaps with FtsA. This chain is Cell division protein SepF, found in Lacticaseibacillus casei (strain BL23) (Lactobacillus casei).